The following is a 483-amino-acid chain: Glutamate--tRNA ligase (483 aa).

The 'HIGH' region motif lies at 9–19 (PSPTGNLHIGT). The 'KMSKS' region signature appears at 250 to 254 (KLSKR). Lysine 253 is an ATP binding site.

Belongs to the class-I aminoacyl-tRNA synthetase family. Glutamate--tRNA ligase type 1 subfamily. In terms of assembly, monomer.

It localises to the cytoplasm. It catalyses the reaction tRNA(Glu) + L-glutamate + ATP = L-glutamyl-tRNA(Glu) + AMP + diphosphate. In terms of biological role, catalyzes the attachment of glutamate to tRNA(Glu) in a two-step reaction: glutamate is first activated by ATP to form Glu-AMP and then transferred to the acceptor end of tRNA(Glu). The chain is Glutamate--tRNA ligase from Synechocystis sp. (strain ATCC 27184 / PCC 6803 / Kazusa).